A 216-amino-acid chain; its full sequence is Putative cat eye syndrome critical region protein 9 (216 aa).

The first 23 residues, 1 to 23, serve as a signal peptide directing secretion; the sequence is MQSHLAPLACAAAAGRAGGSCQA. N-linked (GlcNAc...) asparagine glycosylation is present at Asn148.

Ubiquitously expressed with higher expression in heart.

It localises to the secreted. The chain is Putative cat eye syndrome critical region protein 9 (CECR9) from Homo sapiens (Human).